The chain runs to 160 residues: MSSVVCPGSFDPVTLGHIDVFERAAAQFDEVVVAILINPVKKGMFDLDERIAMINESTMHLPNLRVEAGEGLVVALVRSRGMTAIVKGLRTGVDFEYELQMAQMNKHIAGVDTFFVATAPRYSFVSSSLVKEVAMLGGDVSELLPESVNRRFREKMSGTS.

A substrate-binding site is contributed by S9. ATP is bound by residues 9–10 (SF) and H17. 3 residues coordinate substrate: K41, V73, and K87. ATP contacts are provided by residues 88-90 (GLR), E98, and 122-128 (YSFVSSS).

Belongs to the bacterial CoaD family. Homohexamer. It depends on Mg(2+) as a cofactor.

The protein localises to the cytoplasm. The enzyme catalyses (R)-4'-phosphopantetheine + ATP + H(+) = 3'-dephospho-CoA + diphosphate. The protein operates within cofactor biosynthesis; coenzyme A biosynthesis; CoA from (R)-pantothenate: step 4/5. Functionally, reversibly transfers an adenylyl group from ATP to 4'-phosphopantetheine, yielding dephospho-CoA (dPCoA) and pyrophosphate. This Mycobacterium leprae (strain TN) protein is Phosphopantetheine adenylyltransferase.